A 148-amino-acid polypeptide reads, in one-letter code: MAHLLLLHGPNLNLLGTREPEVYGRTTLAQIDAALVDRAQAAGHTLDCLQSNAEHVLVERIHAAREDGTAFILINPAAFTHTSVSLRDALLGVGLPFVEIHLSNPHTREPFRHHSYLSDKAAGVICGFGADSYRLALEAVIARLERDS.

Y23 functions as the Proton acceptor in the catalytic mechanism. Substrate contacts are provided by N75, H81, and D88. The active-site Proton donor is the H101. Substrate is bound by residues 102 to 103 (LS) and R112.

Belongs to the type-II 3-dehydroquinase family. As to quaternary structure, homododecamer.

It catalyses the reaction 3-dehydroquinate = 3-dehydroshikimate + H2O. It functions in the pathway metabolic intermediate biosynthesis; chorismate biosynthesis; chorismate from D-erythrose 4-phosphate and phosphoenolpyruvate: step 3/7. Functionally, catalyzes a trans-dehydration via an enolate intermediate. This is 3-dehydroquinate dehydratase from Xanthomonas campestris pv. campestris (strain 8004).